Here is a 279-residue protein sequence, read N- to C-terminus: 4-diphosphocytidyl-2-C-methyl-D-erythritol kinase (279 aa).

The active site involves Lys9. Position 92 to 102 (92 to 102 (PLAAGLGGGSS)) interacts with ATP. Residue Asp134 is part of the active site.

Belongs to the GHMP kinase family. IspE subfamily.

It catalyses the reaction 4-CDP-2-C-methyl-D-erythritol + ATP = 4-CDP-2-C-methyl-D-erythritol 2-phosphate + ADP + H(+). It participates in isoprenoid biosynthesis; isopentenyl diphosphate biosynthesis via DXP pathway; isopentenyl diphosphate from 1-deoxy-D-xylulose 5-phosphate: step 3/6. Functionally, catalyzes the phosphorylation of the position 2 hydroxy group of 4-diphosphocytidyl-2C-methyl-D-erythritol. The chain is 4-diphosphocytidyl-2-C-methyl-D-erythritol kinase from Syntrophus aciditrophicus (strain SB).